Consider the following 346-residue polypeptide: Inositol 2-dehydrogenase (346 aa).

The protein belongs to the Gfo/Idh/MocA family. As to quaternary structure, homotetramer.

The enzyme catalyses myo-inositol + NAD(+) = scyllo-inosose + NADH + H(+). Its function is as follows. Involved in the oxidation of myo-inositol (MI) to 2-keto-myo-inositol (2KMI or 2-inosose). The polypeptide is Inositol 2-dehydrogenase (Rhodococcus erythropolis (strain PR4 / NBRC 100887)).